Consider the following 140-residue polypeptide: Histone H2B (140 aa).

Residues 1–47 (MPPKAQKTPTTGGKAPAGKAPVEKKEAGKKTAAPSGEKKKRTKTRKE) are disordered. N6-acetyllysine; alternate is present on K7. K7 participates in a covalent cross-link: Glycyl lysine isopeptide (Lys-Gly) (interchain with G-Cter in SUMO); alternate. Position 14 is an N6-acetyllysine (K14). K24 bears the N6-acetyllysine; alternate mark. A Glycyl lysine isopeptide (Lys-Gly) (interchain with G-Cter in SUMO); alternate cross-link involves residue K24. A Glycyl lysine isopeptide (Lys-Gly) (interchain with G-Cter in SUMO) cross-link involves residue K25. A Glycyl lysine isopeptide (Lys-Gly) (interchain with G-Cter in ubiquitin) cross-link involves residue K134.

It belongs to the histone H2B family. As to quaternary structure, the nucleosome is a histone octamer containing two molecules each of H2A, H2B, H3 and H4 assembled in one H3-H4 heterotetramer and two H2A-H2B heterodimers. The octamer wraps approximately 147 bp of DNA. In terms of processing, monoubiquitinated by BRE1 to form H2BK123ub1. H2BK123ub1 gives a specific tag for epigenetic transcriptional activation and is also prerequisite for H3K4me and H3K79me formation. H2BK123ub1 also modulates the formation of double-strand breaks during meiosis and is a prerequisite for DNA-damage checkpoint activation. Acetylated by GCN5 to form H2BK11ac and H2BK16ac. H2BK16ac can also be formed by ESA1. Acetylation of N-terminal lysines and particularly formation of H2BK11acK16ac has a positive effect on transcription. Post-translationally, sumoylation to form H2BK6su and probably also H2BK16su or H2BK17su, occurs preferentially near the telomeres and represses gene transcription.

The protein resides in the nucleus. It localises to the chromosome. Its function is as follows. Core component of nucleosome. Nucleosomes wrap and compact DNA into chromatin, limiting DNA accessibility to the cellular machineries which require DNA as a template. Histones thereby play a central role in transcription regulation, DNA repair, DNA replication and chromosomal stability. DNA accessibility is regulated via a complex set of post-translational modifications of histones, also called histone code, and nucleosome remodeling. The chain is Histone H2B (HTB1) from Phaeosphaeria nodorum (strain SN15 / ATCC MYA-4574 / FGSC 10173) (Glume blotch fungus).